Here is a 413-residue protein sequence, read N- to C-terminus: Multifunctional CCA protein (413 aa).

Residues Gly8 and Arg11 each contribute to the ATP site. Gly8 and Arg11 together coordinate CTP. Asp21 and Asp23 together coordinate Mg(2+). The ATP site is built by Arg91, Arg141, and Arg144. 3 residues coordinate CTP: Arg91, Arg141, and Arg144. The HD domain maps to 230–331; that stretch reads TGAHLLLVLD…VRLLERCDAL (102 aa).

The protein belongs to the tRNA nucleotidyltransferase/poly(A) polymerase family. Bacterial CCA-adding enzyme type 1 subfamily. In terms of assembly, monomer. Can also form homodimers and oligomers. Requires Mg(2+) as cofactor. The cofactor is Ni(2+).

It carries out the reaction a tRNA precursor + 2 CTP + ATP = a tRNA with a 3' CCA end + 3 diphosphate. It catalyses the reaction a tRNA with a 3' CCA end + 2 CTP + ATP = a tRNA with a 3' CCACCA end + 3 diphosphate. Its function is as follows. Catalyzes the addition and repair of the essential 3'-terminal CCA sequence in tRNAs without using a nucleic acid template. Adds these three nucleotides in the order of C, C, and A to the tRNA nucleotide-73, using CTP and ATP as substrates and producing inorganic pyrophosphate. tRNA 3'-terminal CCA addition is required both for tRNA processing and repair. Also involved in tRNA surveillance by mediating tandem CCA addition to generate a CCACCA at the 3' terminus of unstable tRNAs. While stable tRNAs receive only 3'-terminal CCA, unstable tRNAs are marked with CCACCA and rapidly degraded. The chain is Multifunctional CCA protein from Verminephrobacter eiseniae (strain EF01-2).